A 422-amino-acid chain; its full sequence is Histone deacetylase B (422 aa).

Position 102 (D102) interacts with substrate. Residue H144 is the Proton acceptor of the active site. G152 contacts substrate. Residues D179, H181, and D268 each contribute to the a divalent metal cation site. Y307 contributes to the substrate binding site. The disordered stretch occupies residues 399–422 (IDFDRDEDSKENMDKRKKKHNDFS). Over residues 413–422 (KRKKKHNDFS) the composition is skewed to basic residues.

Belongs to the histone deacetylase family. HD type 1 subfamily.

The protein localises to the nucleus. Its subcellular location is the cytoplasm. It carries out the reaction N(6)-acetyl-L-lysyl-[histone] + H2O = L-lysyl-[histone] + acetate. With respect to regulation, its activity is inhibited by trichostatin A (TSA), a well known histone deacetylase inhibitor. Cytosolic activity is refractory to inhibition by TSA, while the nuclear activity is inhibited completely. Functionally, responsible for the deacetylation of lysine residues on the N-terminal part of the core histones (H2A, H2B, H3 and H4). Histone deacetylation plays an important role in transcriptional regulation, cell cycle progression and developmental events. Histone deacetylases act via the formation of large multiprotein complexes. May play a role in the regulation of the timing of gene expression during the development and in the definition aspects of the phenotype that mediate social behavior in genetically heterogeneous groups. The polypeptide is Histone deacetylase B (hdaB) (Dictyostelium discoideum (Social amoeba)).